The following is a 287-amino-acid chain: Aromatic amino acid exporter YddG (287 aa).

At 1–5 the chain is on the cytoplasmic side; sequence MSRSS. The chain crosses the membrane as a helical span at residues 6 to 24; that stretch reads ATLIGFTAILLWSTLALAT. The region spanning 7–136 is the EamA 1 domain; that stretch reads TLIGFTAILL…MGLAGTVVLL (130 aa). Over 25–31 the chain is Periplasmic; that stretch reads SSTGAVP. Residues 32-54 form a helical membrane-spanning segment; the sequence is PFLLTALTFTIGGAVGIAAGLAR. Over 55 to 65 the chain is Cytoplasmic; that stretch reads GVGLSVLRQPW. Residues 66–86 traverse the membrane as a helical segment; that stretch reads PVWVHGIGGLFGYHFFYFSAL. Residues 87–90 lie on the Periplasmic side of the membrane; sequence KLAP. Residues 91–111 traverse the membrane as a helical segment; it reads PAEAGLVAYLWPLLIVLFSAF. Residues 112–118 lie on the Cytoplasmic side of the membrane; sequence LPGERLR. The helical transmembrane segment at 119–139 threads the bilayer; it reads PAHVAGALMGLAGTVVLLGAR. At 140–149 the chain is on the periplasmic side; the sequence is AGGFGFAPEY. A helical transmembrane segment spans residues 150-170; it reads VPGYLAAAACAVIWSVYSVAS. The 131-residue stretch at 151 to 281 folds into the EamA 2 domain; sequence PGYLAAAACA…ALIVGGAAVA (131 aa). Topologically, residues 171–176 are cytoplasmic; it reads RRFARV. Residues 177 to 198 traverse the membrane as a helical segment; it reads PTEVVAGFCLATAALSALCHIL. Residues 199–208 lie on the Periplasmic side of the membrane; it reads FEPSVWPVGS. The chain crosses the membrane as a helical span at residues 209–233; sequence EWLAVVALGIGPVGIAFYTWDIGMK. The Cytoplasmic portion of the chain corresponds to 234-236; that stretch reads RGD. The chain crosses the membrane as a helical span at residues 237-258; sequence VRLLGVLSYAAPVLSTLLLVVA. Over 259-264 the chain is Periplasmic; that stretch reads GFAAPS. The helical transmembrane segment at 265-284 threads the bilayer; the sequence is GALAIACALIVGGAAVATLL. Residues 285 to 287 are Cytoplasmic-facing; the sequence is ARR.

Belongs to the drug/metabolite transporter (DMT) superfamily. Aromatic amino acid/paraquat exporter (ArAA/P-E) (TC 2.A.7.17) family.

The protein localises to the cell inner membrane. The catalysed reaction is L-threonine(in) = L-threonine(out). It carries out the reaction L-methionine(in) = L-methionine(out). The enzyme catalyses L-lysine(in) = L-lysine(out). It catalyses the reaction L-glutamate(out) = L-glutamate(in). Its function is as follows. Amino acid transporter with broad substrate specificity. Can transport various amino acids, including L-threonine, L-methionine, L-lysine and L-glutamate. The sequence is that of Aromatic amino acid exporter YddG from Ancylobacter novellus (strain ATCC 8093 / DSM 506 / JCM 20403 / CCM 1077 / IAM 12100 / NBRC 12443 / NCIMB 10456) (Starkeya novella).